The chain runs to 969 residues: Levansucrase (969 aa).

Residues 1-52 form the signal peptide; sequence MDITVNSQSNTVAPKQAECKKMRYSIRKVATVGATSALVGTLAFLGATQVKA. The segment covering 89 to 103 has biased composition (low complexity); sequence SEAVESSVAHSEVAT. The tract at residues 89-169 is disordered; sequence SEAVESSVAH…STASSEAADT (81 aa). Residues 106 to 116 show a composition bias toward polar residues; it reads VTETQPSNTTP. Low complexity predominate over residues 124 to 166; sequence SSTVVTSSSDATTPSATVAAVSAPAHTSEAAVEAPTSTASSEA. Sucrose contacts are provided by Trp286, Asp287, and Ser356. Catalysis depends on Asp287, which acts as the Nucleophile. Asp443 is a binding site for Ca(2+). Residues Arg448 and Asp449 each contribute to the sucrose site. Ca(2+)-binding residues include Gln473, Asn512, and Asp544. Glu545 lines the sucrose pocket. Residue Glu547 is the Proton donor/acceptor of the active site. Arg565 lines the sucrose pocket. Disordered stretches follow at residues 746-843 and 860-934; these read VKDG…VGDR and IVAT…SEGS. Residues 747–758 are compositionally biased toward basic and acidic residues; the sequence is KDGKDKKADKPE. Polar residues predominate over residues 776 to 789; sequence KPGTSKPADNNQPS. The segment covering 872–910 has biased composition (basic and acidic residues); it reads VKEESVTETEAPKPVKSEEKVQSHGVDKANEVTKSDESS. The segment covering 924-934 has biased composition (polar residues); the sequence is TPKTPSDSEGS. The helical transmembrane segment at 938–958 threads the bilayer; sequence ILSILATIFAAIASLALLGYG.

Belongs to the glycosyl hydrolase 68 family.

The protein resides in the cell membrane. The protein localises to the cell surface. The enzyme catalyses [6)-beta-D-fructofuranosyl-(2-&gt;](n) alpha-D-glucopyranoside + sucrose = [6)-beta-D-fructofuranosyl-(2-&gt;](n+1) alpha-D-glucopyranoside + D-glucose. With respect to regulation, ca(2+) may play an important structural role and promote stability of levansucrase. Functionally, catalyzes the synthesis of levan, a fructose polymer, by transferring the fructosyl moiety from sucrose to a growing acceptor molecule. Also displays sucrose hydrolase activity. The sequence is that of Levansucrase from Streptococcus salivarius.